Reading from the N-terminus, the 121-residue chain is Phosphoribosyl-ATP pyrophosphatase (121 aa).

Belongs to the PRA-PH family.

It localises to the cytoplasm. It carries out the reaction 1-(5-phospho-beta-D-ribosyl)-ATP + H2O = 1-(5-phospho-beta-D-ribosyl)-5'-AMP + diphosphate + H(+). The protein operates within amino-acid biosynthesis; L-histidine biosynthesis; L-histidine from 5-phospho-alpha-D-ribose 1-diphosphate: step 2/9. In Burkholderia cenocepacia (strain HI2424), this protein is Phosphoribosyl-ATP pyrophosphatase.